The sequence spans 226 residues: Deoxyribose-phosphate aldolase (226 aa).

The active-site Proton donor/acceptor is the Asp84. The Schiff-base intermediate with acetaldehyde role is filled by Lys146. The active-site Proton donor/acceptor is Lys188.

It belongs to the DeoC/FbaB aldolase family. DeoC type 1 subfamily. Homodimer.

The protein resides in the cytoplasm. It catalyses the reaction 2-deoxy-D-ribose 5-phosphate = D-glyceraldehyde 3-phosphate + acetaldehyde. The protein operates within carbohydrate degradation; 2-deoxy-D-ribose 1-phosphate degradation; D-glyceraldehyde 3-phosphate and acetaldehyde from 2-deoxy-alpha-D-ribose 1-phosphate: step 2/2. Its function is as follows. Catalyzes a reversible aldol reaction between acetaldehyde and D-glyceraldehyde 3-phosphate to generate 2-deoxy-D-ribose 5-phosphate. This chain is Deoxyribose-phosphate aldolase, found in Pyrobaculum aerophilum (strain ATCC 51768 / DSM 7523 / JCM 9630 / CIP 104966 / NBRC 100827 / IM2).